The following is a 164-amino-acid chain: MTSTNTRNKGKCIVEGPPPTLSRYESQKSRDWNTFCQYLMTKMPPVHVWECESNHILDFLQSRDQFGKTKVHIQGCVFFGQKEPPGECNCPLKQAWGSLDALIGRLRAAYEENGGLTEKNPFARGGIRIFLREVRGSQAKARGVLYKKKKRLVVVGTGTSTTWT.

An ALOG domain is found at 23 to 150; sequence RYESQKSRDW…ARGVLYKKKK (128 aa). The Nuclear localization signal motif lies at 148–152; the sequence is KKKRL.

The protein belongs to the plant homeotic and developmental regulators ALOG protein family.

The protein resides in the nucleus. Functionally, probable transcription regulator that acts as a developmental regulator by promoting cell growth in response to light. This chain is Protein LIGHT-DEPENDENT SHORT HYPOCOTYLS 8 (LSH8), found in Arabidopsis thaliana (Mouse-ear cress).